The chain runs to 136 residues: uncharacterized protein (136 aa).

This is an uncharacterized protein from Bacillus anthracis.